The following is a 389-amino-acid chain: Chalcone synthase 1 (389 aa).

Residue Cys-164 is part of the active site.

This sequence belongs to the thiolase-like superfamily. Chalcone/stilbene synthases family.

The catalysed reaction is (E)-4-coumaroyl-CoA + 3 malonyl-CoA + 3 H(+) = 2',4,4',6'-tetrahydroxychalcone + 3 CO2 + 4 CoA. It participates in secondary metabolite biosynthesis; flavonoid biosynthesis. Its function is as follows. The primary product of this enzyme is 4,2',4',6'-tetrahydroxychalcone (also termed naringenin-chalcone or chalcone) which can under specific conditions spontaneously isomerize into naringenin. The sequence is that of Chalcone synthase 1 (CHS1) from Solanum lycopersicum (Tomato).